The chain runs to 484 residues: Cobyric acid synthase (484 aa).

A GATase cobBQ-type domain is found at 249–438; sequence QLRVAVPVFT…LHGIFDRPET (190 aa). Cys330 functions as the Nucleophile in the catalytic mechanism. His430 is an active-site residue.

Belongs to the CobB/CobQ family. CobQ subfamily.

Its pathway is cofactor biosynthesis; adenosylcobalamin biosynthesis. Its function is as follows. Catalyzes amidations at positions B, D, E, and G on adenosylcobyrinic A,C-diamide. NH(2) groups are provided by glutamine, and one molecule of ATP is hydrogenolyzed for each amidation. The sequence is that of Cobyric acid synthase from Vibrio cholerae serotype O1 (strain ATCC 39315 / El Tor Inaba N16961).